We begin with the raw amino-acid sequence, 221 residues long: Protein-L-isoaspartate O-methyltransferase (221 aa).

Serine 57 is a catalytic residue.

This sequence belongs to the methyltransferase superfamily. L-isoaspartyl/D-aspartyl protein methyltransferase family.

It is found in the cytoplasm. The catalysed reaction is [protein]-L-isoaspartate + S-adenosyl-L-methionine = [protein]-L-isoaspartate alpha-methyl ester + S-adenosyl-L-homocysteine. Its function is as follows. Catalyzes the methyl esterification of L-isoaspartyl residues in peptides and proteins that result from spontaneous decomposition of normal L-aspartyl and L-asparaginyl residues. It plays a role in the repair and/or degradation of damaged proteins. This chain is Protein-L-isoaspartate O-methyltransferase, found in Korarchaeum cryptofilum (strain OPF8).